A 249-amino-acid chain; its full sequence is Sulfate transporter CysZ (249 aa).

Helical transmembrane passes span 26–46, 71–91, 150–170, and 206–226; these read LFVLLPLAINLVLFVGLIYFA, VIWPLFVVLVAFMVFFSFTML, LFILSLIPVVNLIAAPLWLLF, and LGFGGIVYLALLIPLVNILMM.

This sequence belongs to the CysZ family.

The protein resides in the cell inner membrane. High affinity, high specificity proton-dependent sulfate transporter, which mediates sulfate uptake. Provides the sulfur source for the cysteine synthesis pathway. In Pseudomonas fluorescens (strain ATCC BAA-477 / NRRL B-23932 / Pf-5), this protein is Sulfate transporter CysZ.